Consider the following 1597-residue polypeptide: Protein STU1 (1597 aa).

Disordered stretches follow at residues 220–265 (GNSS…PSSS), 519–958 (DKVN…RPIH), 1005–1154 (DAEA…ELNT), and 1307–1332 (SQRPPDKRTSRAFLEAPSPSPDSSLV). A compositionally biased stretch (basic and acidic residues) spans 535 to 552 (APRESLKEVMRRSRESSV). Low complexity predominate over residues 577-605 (SSGLVGRSLSGSNLTDRSNRLSSTSTSSR). 2 stretches are compositionally biased toward polar residues: residues 610-622 (AVSDSTRPTQMTR) and 632-645 (PSLTRSSRDQSLTR). 2 stretches are compositionally biased toward basic and acidic residues: residues 660 to 673 (GSRELPKQRVDQNR) and 694 to 708 (ESSRQSRESSLDPSR). The segment covering 709–726 (ESSLAPSVHSSTAISRES) has biased composition (polar residues). Low complexity predominate over residues 765-781 (EETMNEVTTAEATATTA). 2 stretches are compositionally biased toward polar residues: residues 791 to 801 (PRESTPPNSSP) and 808 to 822 (PATQGVSTSPATGKS). The span at 832-846 (ELSRDLNGESKHLKE) shows a compositional bias: basic and acidic residues. Polar residues-rich tracts occupy residues 918 to 933 (DSQSHGADSADLQSEP), 1013 to 1025 (TEQTEAVKTSDTA), and 1036 to 1045 (NSEQGPSTEP). Basic and acidic residues predominate over residues 1081–1091 (ASDEIETDHTK). The span at 1108-1119 (EPMEICDSDNDA) shows a compositional bias: acidic residues. Polar residues predominate over residues 1122-1139 (NGTNPDTKCQDQQDSTTP). One copy of the HEAT repeat lies at 1537 to 1573 (PSYETQLLALITELISDPDPLVRRVTVGLVVRVLRVS).

This sequence belongs to the CLASP family. As to quaternary structure, interacts with microtubules.

Its subcellular location is the cytoplasm. It localises to the cytoskeleton. The protein localises to the nucleus. The protein resides in the spindle. Microtubule binding protein that promotes the stabilization of dynamic microtubules. Required for mitotic spindle formation. The chain is Protein STU1 (STU1) from Yarrowia lipolytica (strain CLIB 122 / E 150) (Yeast).